The following is a 503-amino-acid chain: Glutamyl-tRNA(Gln) amidotransferase subunit A (503 aa).

Residues Lys79 and Ser154 each act as charge relay system in the active site. The active-site Acyl-ester intermediate is the Ser178.

This sequence belongs to the amidase family. GatA subfamily. As to quaternary structure, heterotrimer of A, B and C subunits.

It carries out the reaction L-glutamyl-tRNA(Gln) + L-glutamine + ATP + H2O = L-glutaminyl-tRNA(Gln) + L-glutamate + ADP + phosphate + H(+). Its function is as follows. Allows the formation of correctly charged Gln-tRNA(Gln) through the transamidation of misacylated Glu-tRNA(Gln) in organisms which lack glutaminyl-tRNA synthetase. The reaction takes place in the presence of glutamine and ATP through an activated gamma-phospho-Glu-tRNA(Gln). This chain is Glutamyl-tRNA(Gln) amidotransferase subunit A, found in Agathobacter rectalis (strain ATCC 33656 / DSM 3377 / JCM 17463 / KCTC 5835 / VPI 0990) (Eubacterium rectale).